We begin with the raw amino-acid sequence, 66 residues long: Large ribosomal subunit protein uL29 (66 aa).

This sequence belongs to the universal ribosomal protein uL29 family.

The sequence is that of Large ribosomal subunit protein uL29 from Bacillus anthracis (strain CDC 684 / NRRL 3495).